The primary structure comprises 258 residues: UPF0246 protein ETA_07010 (258 aa).

The protein belongs to the UPF0246 family.

In Erwinia tasmaniensis (strain DSM 17950 / CFBP 7177 / CIP 109463 / NCPPB 4357 / Et1/99), this protein is UPF0246 protein ETA_07010.